The chain runs to 582 residues: Protein NUCLEAR FUSION DEFECTIVE 4 (582 aa).

Positions 1–20 are disordered; that stretch reads MRPRIRDVSDKLRPNRASFD. 8 helical membrane-spanning segments follow: residues 46–66, 100–120, 132–152, 172–192, 202–222, 243–263, 270–290, and 358–378; these read VLVAAIWIQASTGTNFDFSAY, IALGYFPLSVVLFAAAAMGFV, IITLPYSLVFLCCLLAGLSIC, LALSLTVSFNGISAALYSLAF, LYLLLNSLVPLVVSFAALYPV, VFTILNVLAVITSFHLLLSSS, LNFIGAVVLLVFPLCAPLLVY, and LEFWLYYIAYFCGGTIGLVYS. Asn391 carries an N-linked (GlcNAc...) asparagine glycan. 5 consecutive transmembrane segments (helical) span residues 395–412, 425–445, 458–478, 489–509, and 536–556; these read LVTIYSSFSFFGRLLSAA, TGWFAIALLPTPIAFFLLAVS, LIGLSSGFIFAAAVSITSDLF, ILITNIPIGSLLYGYIAASIY, and TFVFWGCLSILGVVSSLSLYI.

Its subcellular location is the membrane. Its function is as follows. Required for karyogamy during female gametophyte development, when the two polar nuclei fuse to form the diploid central cell nucleus. This Arabidopsis thaliana (Mouse-ear cress) protein is Protein NUCLEAR FUSION DEFECTIVE 4.